The sequence spans 144 residues: uncharacterized protein (144 aa).

2 N-linked (GlcNAc...) asparagine glycosylation sites follow: Asn-14 and Asn-15. Residues 90-110 form a helical membrane-spanning segment; sequence FSWFIFGLFIACLLLCITLVL. Residues 120–144 are disordered; the sequence is NKATEVVPSSNIDDEEKQLSLSDMI.

The protein localises to the membrane. This is an uncharacterized protein from Saccharomyces cerevisiae (strain ATCC 204508 / S288c) (Baker's yeast).